We begin with the raw amino-acid sequence, 66 residues long: Small ribosomal subunit protein eS27 (66 aa).

C21, C24, C40, and C43 together coordinate Zn(2+). The C4-type zinc-finger motif lies at 21–43; that stretch reads CPNCGNEQTVFSHATFPVRCLSC.

This sequence belongs to the eukaryotic ribosomal protein eS27 family. In terms of assembly, part of the 30S ribosomal subunit. Requires Zn(2+) as cofactor.

This is Small ribosomal subunit protein eS27 from Sulfurisphaera tokodaii (strain DSM 16993 / JCM 10545 / NBRC 100140 / 7) (Sulfolobus tokodaii).